The primary structure comprises 82 residues: Neuropeptide-like peptide 36 (82 aa).

This chain is Neuropeptide-like peptide 36 (nlp-36), found in Caenorhabditis elegans.